A 588-amino-acid chain; its full sequence is Nuclear hormone receptor family member nhr-23 (588 aa).

The segment at 50 to 73 (LHAKSSLQPSLSIETPKSKENDES) is disordered. Residues 52-64 (AKSSLQPSLSIET) show a composition bias toward polar residues. A DNA-binding region (nuclear receptor) is located at residues 160–235 (VIPCKVCGDK…LGMSRDAVKF (76 aa)). NR C4-type zinc fingers lie at residues 163–183 (CKVCGDKSSGVHYGVITCEGC) and 199–223 (CPRQKNCVVDRVNRNRCQYCRLKKC). The 242-residue stretch at 345 to 586 (PEEDVATRVI…ALYKELFTAD (242 aa)) folds into the NR LBD domain.

It belongs to the nuclear hormone receptor family. NR1 subfamily. As to expression, expressed in the germline and oocytes and is a maternal gene product. In males and sperm-producing hermaphrodites, expressed in early pachytene spermatocytes, increasing in level throughout late pachytene. Expression is undetectable in meiotically dividing spermatocytes or mature spermatids.

It is found in the nucleus. Functionally, orphan nuclear receptor. Transcription factor. Modulates expression of target genes, such as Period protein homolog lin-42 and microRNA let-7, by binding to hormone response elements (HRE). Involved in promoting oscillatory expression of the primary transcripts of let-7 and paralogous microRNAs miR-48, miR-84, and miR-241. Plays a role in normal development and required to regulate each larval molt. Involved in regulating both the frequency and number of molts, acting as part of a negative feedback loop with the let-7 family of microRNAs, perhaps contributing to a self-sustaining molecular-genetic oscillator. Positively modulates expression of collagen and hedgehog-related genes. Involved in development of the gonad and associated epidermal structures. Required in spermatogenesis, acting following the sperm/oocyte cell fate decision, downstream of the canonical sex-determination pathway. Involved in regulating formation of the sperm-specific fibrous body-membranous organelle (FB-MO) complexes, acting independently of transcription regulator spe-44. The sequence is that of Nuclear hormone receptor family member nhr-23 from Caenorhabditis elegans.